Consider the following 251-residue polypeptide: GTP cyclohydrolase 1 type 2 homolog (251 aa).

A divalent metal cation contacts are provided by H64, H65, D102, H219, and E223.

Belongs to the GTP cyclohydrolase I type 2/NIF3 family. As to quaternary structure, homohexamer.

The polypeptide is GTP cyclohydrolase 1 type 2 homolog (Chlamydia muridarum (strain MoPn / Nigg)).